A 149-amino-acid polypeptide reads, in one-letter code: Protein RhiC (149 aa).

A signal peptide spans 1–23 (MTATLRAFGWLAAFALTVTFAQG).

Its subcellular location is the periplasm. In terms of biological role, may be involved in plant-microbe interaction. This chain is Protein RhiC (rhiC), found in Rhizobium leguminosarum bv. viciae.